Consider the following 543-residue polypeptide: Phosphoenolpyruvate carboxykinase (ATP) (543 aa).

Residue Gly-244–Thr-251 coordinates ATP.

Belongs to the phosphoenolpyruvate carboxykinase (ATP) family.

The enzyme catalyses oxaloacetate + ATP = phosphoenolpyruvate + ADP + CO2. Its pathway is carbohydrate biosynthesis; gluconeogenesis. This Kluyveromyces lactis (strain ATCC 8585 / CBS 2359 / DSM 70799 / NBRC 1267 / NRRL Y-1140 / WM37) (Yeast) protein is Phosphoenolpyruvate carboxykinase (ATP) (PCK1).